The sequence spans 376 residues: Protein-tyrosine sulfotransferase 2 (376 aa).

Residues 1-8 (MRLSVRKV) lie on the Cytoplasmic side of the membrane. The helical; Signal-anchor for type II membrane protein transmembrane segment at 9–25 (LLAVGCALALVLAVQLG) threads the bilayer. The Lumenal portion of the chain corresponds to 26 to 376 (QQVLECRAVL…NSTSPHLGSS (351 aa)). 77–81 (RSGTT) serves as a coordination point for 3'-phosphoadenylyl sulfate. Cysteines 95 and 155 form a disulfide. Residue glutamate 98 is the Proton donor/acceptor of the active site. The segment at 100–104 (RIIPR) is interaction with peptide substrate. 3 residues coordinate 3'-phosphoadenylyl sulfate: arginine 182, serine 190, and arginine 194. Cysteines 224 and 232 form a disulfide. Residues tyrosine 237, 284–293 (STDQVIKPVN), and lysine 299 each bind 3'-phosphoadenylyl sulfate. N-linked (GlcNAc...) asparagine glycans are attached at residues asparagine 342 and asparagine 367.

It belongs to the protein sulfotransferase family. Homodimer. Can also form heterodimers with TPST1. Post-translationally, N-glycosylated.

It localises to the golgi apparatus membrane. It catalyses the reaction L-tyrosyl-[protein] + 3'-phosphoadenylyl sulfate = O-sulfo-L-tyrosine-[protein] + adenosine 3',5'-bisphosphate + H(+). Functionally, catalyzes the O-sulfation of tyrosine residues within acidic motifs of polypeptides, using 3'-phosphoadenylyl sulfate (PAPS) as cosubstrate. In Rattus norvegicus (Rat), this protein is Protein-tyrosine sulfotransferase 2 (Tpst2).